A 732-amino-acid chain; its full sequence is Polyphosphate kinase (732 aa).

Residue Asn61 coordinates ATP. Arg417 and Arg447 together coordinate Mg(2+). His477 functions as the Phosphohistidine intermediate in the catalytic mechanism. Tyr510, Arg606, and His634 together coordinate ATP. The tract at residues 699–718 (DGTYRQRQPAPGEAERGTHS) is disordered.

It belongs to the polyphosphate kinase 1 (PPK1) family. The cofactor is Mg(2+). Post-translationally, an intermediate of this reaction is the autophosphorylated ppk in which a phosphate is covalently linked to a histidine residue through a N-P bond.

The catalysed reaction is [phosphate](n) + ATP = [phosphate](n+1) + ADP. Functionally, catalyzes the reversible transfer of the terminal phosphate of ATP to form a long-chain polyphosphate (polyP). This chain is Polyphosphate kinase, found in Thermosynechococcus vestitus (strain NIES-2133 / IAM M-273 / BP-1).